A 258-amino-acid polypeptide reads, in one-letter code: MVTAHFVLIHTICHGAWIWHKLKPALERAGHKVTALDMAASGIDPRQIEQINSFDEYSEPLLTFLEKLPQGEKVIIVGESCAGLNIAIAADRYVDKIAAGVFHNSLLPDTVHSPSYTVEKLLESFPDWRDTEYFTFTNITGETITTMKLGFVLLRENLFTKCTDGEYELAKMVMRKGSLFQNVLAQRPKFTEKGYGSIKKVYIWTDQDKIFLPDFQRWQIANYKPDKVYQVQGGDHKLQLTKTEEVAHILQEVADAYA.

The AB hydrolase-1 domain maps to 5 to 242 (HFVLIHTICH…GGDHKLQLTK (238 aa)). Threonine 11 and serine 80 together coordinate 2-hydroxy-2-methylpropanenitrile. Acetone-binding residues include threonine 11, serine 80, and cysteine 81. The active-site Proton donor/acceptor is the serine 80. Histidine 236 serves as the catalytic Proton donor/acceptor.

This sequence belongs to the AB hydrolase superfamily. Hydroxynitrile lyase family. In terms of assembly, homotetramer.

It carries out the reaction a monosubstituted aliphatic (S)-hydroxynitrile = an aldehyde + hydrogen cyanide. The catalysed reaction is a disubstituted aliphatic (S)-hydroxynitrile = a ketone + hydrogen cyanide. It catalyses the reaction an aromatic (S)-hydroxynitrile = an aromatic aldehyde + hydrogen cyanide. The enzyme catalyses 2-hydroxy-2-methylpropanenitrile = acetone + hydrogen cyanide. It carries out the reaction butan-2-one + hydrogen cyanide = 2-hydroxy-2-methylbutanenitrile. The catalysed reaction is pentan-2-one + hydrogen cyanide = (2S)-2-hydroxy-2-methylpentanenitrile. It catalyses the reaction hexan-2-one + hydrogen cyanide = (2S)-2-hydroxy-2-methylhexanenitrile. The enzyme catalyses heptan-2-one + hydrogen cyanide = (2S)-2-hydroxy-2-methylheptanenitrile. It carries out the reaction 4-methylpentan-2-one + hydrogen cyanide = (2S)-2-hydroxy-2,4-dimethylpentanenitrile. The catalysed reaction is 3,3-dimethylbutan-2-one + hydrogen cyanide = (2S)-2-hydroxy-2-methyl-3,3-dimethylbutanenitrile. It catalyses the reaction acetophenone + hydrogen cyanide = (2S)-2-hydroxy-2-phenylpropanenitrile. The enzyme catalyses propanal + hydrogen cyanide = (2S)-2-hydroxybutanenitrile. It carries out the reaction pentanal + hydrogen cyanide = (2S)-2-hydroxyhexanenitrile. The catalysed reaction is 2-methylpropanal + hydrogen cyanide = (2S)-2-hydroxy-3-methylbutanenitrile. It catalyses the reaction 2,2-dimethylpropanal + hydrogen cyanide = (2S)-2-hydroxy-3,3-dimethylbutanenitrile. The enzyme catalyses acrolein + hydrogen cyanide = (2S)-2-hydroxybut-3-enenitrile. It carries out the reaction (2E)-but-2-enal + hydrogen cyanide = (2S,3E)-2-hydroxypent-3-enenitrile. The catalysed reaction is (E)-hex-2-enal + hydrogen cyanide = (2S,3E)-2-hydroxyhept-3-enenitrile. It catalyses the reaction cyclohexanecarbaldehyde + hydrogen cyanide = (2S)-2-cyclohexyl-2-hydroxyacetonitrile. The enzyme catalyses benzaldehyde + hydrogen cyanide = (S)-mandelonitrile. It carries out the reaction 4-methoxybenzaldehyde + hydrogen cyanide = (2S)-2-hydroxy-2-(4-methoxyphenyl)acetonitrile. The catalysed reaction is piperonal + hydrogen cyanide = (2S)-2-(2H-1,3-benzodioxol-5-yl)-2-hydroxyacetonitrile. It catalyses the reaction formylthiophene + hydrogen cyanide = (2R)-2-hydroxy-2-(thiophen-2-yl)acetonitrile. The enzyme catalyses 3-formylthiophene + hydrogen cyanide = (2S)-2-hydroxy-2-(thiophen-3-yl)acetonitrile. It carries out the reaction furan-3-carbaldehyde + hydrogen cyanide = (2S)-2-(furan-3-yl)-2-hydroxyacetonitrile. Involved in cyanogenesis, the release of HCN from cyanogenic glycosides in injured tissues; the release of toxic HCN is believed to play a central role in the defense mechanism of plants against herbivores and microbial attack. Decomposes a variety of cyanohydrins (alpha-hydroxynitriles) into HCN and the corresponding aldehydes or ketones; two natural substrates are 2-hydroxy-2-methylpropanenitrile (acetone cyanohydrin) and 2-hydroxy-2-methylbutanenitrile (2-butanone cyanohydrin), but in vitro can also act on 2-hydroxy-2-methylpentanenitrile (2-pentanone cyanohydrin) and mandelonitrile. Is also able to catalyze the reverse reaction in vitro, leading to the stereospecific synthesis of aliphatic, aromatic, and heterocyclic cyanohydrins, important intermediates in the production of various agrochemicals or pharmaceuticals. The chain is (S)-hydroxynitrile lyase from Manihot esculenta (Cassava).